The chain runs to 99 residues: Acylphosphatase (99 aa).

The Acylphosphatase-like domain maps to 14 to 99 (AVDVTVTGRV…DQGLRSFGVR (86 aa)). Active-site residues include Arg29 and Asn47.

This sequence belongs to the acylphosphatase family.

The catalysed reaction is an acyl phosphate + H2O = a carboxylate + phosphate + H(+). This is Acylphosphatase (acyP) from Nocardioides sp. (strain ATCC BAA-499 / JS614).